We begin with the raw amino-acid sequence, 189 residues long: Apolipoprotein D (189 aa).

The signal sequence occupies residues 1–21 (MAPTLLLLLPALAGLISVAQG). At Gln22 the chain carries Pyrrolidone carboxylic acid. Cystine bridges form between Cys29-Cys135 and Cys62-Cys186. N-linked (GlcNAc...) asparagine glycosylation is found at Asn66 and Asn99.

Belongs to the calycin superfamily. Lipocalin family. As to quaternary structure, homodimer. Most heavily expressed in adrenal gland, lung, brain, testis and spleen.

It is found in the secreted. In terms of biological role, APOD occurs in the macromolecular complex with lecithin-transport and binding of bilin. Appears to be able to transport a variety of ligands in a number of different contexts. This Oryctolagus cuniculus (Rabbit) protein is Apolipoprotein D (APOD).